The following is a 166-amino-acid chain: CDP-archaeol synthase (166 aa).

5 helical membrane-spanning segments follow: residues 1–21 (MPII…LVAN), 55–75 (LLVA…FLGI), 78–98 (IYVS…GAFI), 110–130 (AIGL…IISK), and 131–151 (ISLN…LHIL).

It belongs to the CDP-archaeol synthase family. It depends on Mg(2+) as a cofactor.

Its subcellular location is the cell membrane. It carries out the reaction 2,3-bis-O-(geranylgeranyl)-sn-glycerol 1-phosphate + CTP + H(+) = CDP-2,3-bis-O-(geranylgeranyl)-sn-glycerol + diphosphate. It participates in membrane lipid metabolism; glycerophospholipid metabolism. In terms of biological role, catalyzes the formation of CDP-2,3-bis-(O-geranylgeranyl)-sn-glycerol (CDP-archaeol) from 2,3-bis-(O-geranylgeranyl)-sn-glycerol 1-phosphate (DGGGP) and CTP. This reaction is the third ether-bond-formation step in the biosynthesis of archaeal membrane lipids. This chain is CDP-archaeol synthase, found in Sulfurisphaera tokodaii (strain DSM 16993 / JCM 10545 / NBRC 100140 / 7) (Sulfolobus tokodaii).